We begin with the raw amino-acid sequence, 137 residues long: Large ribosomal subunit protein uL16 (137 aa).

Belongs to the universal ribosomal protein uL16 family. Part of the 50S ribosomal subunit.

Functionally, binds 23S rRNA and is also seen to make contacts with the A and possibly P site tRNAs. In Methylobacterium sp. (strain 4-46), this protein is Large ribosomal subunit protein uL16.